The following is a 401-amino-acid chain: Membrane protein UL43 homolog (401 aa).

Transmembrane regions (helical) follow at residues 43–63, 67–87, 93–113, 124–144, 159–179, 182–202, 259–279, 294–314, 332–352, and 379–399; these read FVGIGLQACVLTSSILHIDLL, STCLILMIISMYVLSLIRVPI, IVTVCRSIQALATLVAASVWV, LIVVTVCILFVFIAGTQISLF, ASLLAIIGGCVLGVSVKLVEL, VPIGIGIAIAIIASCQDFGLA, PGVIFSPAVGTHATPIIWIVL, YVVFCLTVGHVSAMLLEQLVI, AVCMVLAAFGYGVAAPLSLAF, and ISRWLIVCVYVAAGLCYATII.

This sequence belongs to the alphaherpesvirinae HHV-1 UL43 family.

The protein resides in the membrane. The polypeptide is Membrane protein UL43 homolog (Equine herpesvirus 1 (strain Ab4p) (EHV-1)).